The following is a 230-amino-acid chain: PKHD-type hydroxylase XF_0598 (230 aa).

Residues 78–182 enclose the Fe2OG dioxygenase domain; it reads RTLPPRFNCY…RIASFFWVQS (105 aa). His96, Asp98, and His163 together coordinate Fe cation. Residue Arg173 coordinates 2-oxoglutarate.

The cofactor is Fe(2+). Requires L-ascorbate as cofactor.

This is PKHD-type hydroxylase XF_0598 from Xylella fastidiosa (strain 9a5c).